The sequence spans 497 residues: Latent membrane protein 2 (497 aa).

Positions 1 to 108 are disordered; that stretch reads MGSLEMVPMG…PPYSPRDDSS (108 aa). At 1-123 the chain is on the cytoplasmic side; it reads MGSLEMVPMG…EAGRGSMNPV (123 aa). The segment covering 27 to 41 has biased composition (polar residues); that stretch reads NNSQYPSASGSSGNT. The short motif at 97 to 101 is the PPxY motif element; that stretch reads PPPPY. Tyr-112 is subject to Phosphotyrosine; by host. Residues 124–144 form a helical membrane-spanning segment; it reads CLPVIVAPYLFWLAAIAASCF. Residues 145–147 are Extracellular-facing; that stretch reads TAS. A helical transmembrane segment spans residues 148 to 168; sequence VSTVVTATGLALSLLLLAAVA. Over 169-177 the chain is Cytoplasmic; the sequence is SSYAAAQRK. The helical transmembrane segment at 178-198 threads the bilayer; that stretch reads LLTPVTVLTAVVTFFAICLTW. Residues 199 to 211 are Extracellular-facing; sequence RIEDPPFNSLLFA. Residues 212 to 232 traverse the membrane as a helical segment; sequence LLAAAGGLQGIYVLVMLVLLI. At 233 to 241 the chain is on the cytoplasmic side; it reads LAYRRRWRR. Residues 242–262 form a helical membrane-spanning segment; the sequence is LTVCGGIMFLACVLVLIVDAV. The Extracellular segment spans residues 263–267; the sequence is LQLSP. A helical transmembrane segment spans residues 268–288; that stretch reads LLGAVTVVSMTLLLLAFVLWL. Topologically, residues 289-296 are cytoplasmic; it reads SSPGGLGT. Residues 297–317 traverse the membrane as a helical segment; sequence LGAALLTLAAALALLASLILG. A topological domain (extracellular) is located at residue Thr-318. Residues 319–339 traverse the membrane as a helical segment; that stretch reads LNLTTMFLLMLLWTLVVLLIC. The Cytoplasmic portion of the chain corresponds to 340-354; sequence SSCSSCPLSKILLAR. The chain crosses the membrane as a helical span at residues 355 to 375; that stretch reads LFLYALALLLLASALIAGGSI. Topologically, residues 376-388 are extracellular; sequence LQTNFKSLSSTEF. The chain crosses the membrane as a helical span at residues 389–409; it reads IPNLFCMLLLIVAGILFILAI. Over 410–422 the chain is Cytoplasmic; sequence LTEWGSGNRTYGP. Residues 423–443 traverse the membrane as a helical segment; that stretch reads VFMCLGGLLTMVAGAVWLTVM. At 444-449 the chain is on the extracellular side; sequence SNTLLS. The chain crosses the membrane as a helical span at residues 450-470; it reads AWILTAGFLIFLIGFALFGVI. Residues 471-497 lie on the Cytoplasmic side of the membrane; sequence RCCRYCCYYCLTLESEERPPTPYRNTV.

It belongs to the herpesviridae LMP-2 family. The cytoplasmic N-terminal domain interacts with human SRC family protein tyrosine kinases SYK and LYN. Binds human ITCH, WWP2 and NEDD4L. In terms of processing, phosphorylated on cytoplasmic N-terminal tyrosine residues, possibly by human LYN. Can be ubiquitinated by human ITCH and WWP2 on the N-terminus in a lysine-independent manner.

It localises to the host cell membrane. It is found in the host endomembrane system. The protein localises to the host cytoplasm. The protein resides in the host perinuclear region. Maintains EBV latent infection of B-lymphocyte, by preventing lytic reactivation of the virus in response to surface immunoglobulin (sIg) cross-linking. Acts like a dominant negative inhibitor of the sIg-associated protein tyrosine kinases, LYN and SYK. Also blocks translocation of the B-cell antigen receptor (BCR) into lipid rafts, preventing the subsequent signaling and accelerated internalization of the BCR upon BCR cross-linking. Serves as a molecular scaffold to recruit SYK, LYN and E3 protein-ubiquitin ligases, such as ITCH and NEDD4L, leading to ubiquitination and potential degradation of both tyrosines kinases. Possesses a constitutive signaling activity in non-transformed cells, inducing bypass of normal B lymphocyte developmental checkpoints allowing immunoglobulin-negative cells to colonize peripheral lymphoid organs. In terms of biological role, may be a negative regulator of isoform LMP2A. The protein is Latent membrane protein 2 (LMP2) of Epstein-Barr virus (strain B95-8) (HHV-4).